Here is a 662-residue protein sequence, read N- to C-terminus: ABC transporter G family member 17 (662 aa).

The region spanning 22-276 (LAFNDLTYNV…FSEFGSPIPE (255 aa)) is the ABC transporter domain. Residue 69 to 76 (GASGAGKS) participates in ATP binding. In terms of domain architecture, ABC transmembrane type-2 spans 356-566 (VETVILAKRY…PYEAVLHNEF (211 aa)). A run of 6 helical transmembrane segments spans residues 375 to 395 (LIGT…TVYW), 410 to 430 (FFSF…PAFI), 451 to 471 (VISH…GFAA), 486 to 508 (FIYY…TFVS), 514 to 536 (VMMS…GFYV), and 635 to 655 (LWVT…SLLL).

The protein belongs to the ABC transporter superfamily. ABCG family. Eye pigment precursor importer (TC 3.A.1.204) subfamily.

The protein resides in the membrane. In Arabidopsis thaliana (Mouse-ear cress), this protein is ABC transporter G family member 17 (ABCG17).